Consider the following 367-residue polypeptide: Forkhead box protein I2-B (367 aa).

The span at 31–40 (QQQNQQLPQR) shows a compositional bias: low complexity. Residues 31–51 (QQQNQQLPQRPAAPPAPGYGL) form a disordered region. Residues 124-218 (RPPYSYSSLI…DNGNFRRKRK (95 aa)) constitute a DNA-binding region (fork-head). The interval 224-254 (VGAGFDEESNEDKKPLALKSLGPDSPGGASV) is disordered.

It localises to the nucleus. In terms of biological role, possible transcriptional activator. This chain is Forkhead box protein I2-B (foxi2-b), found in Xenopus laevis (African clawed frog).